The sequence spans 359 residues: Putative plant UBX domain-containing protein 15 (359 aa).

The UBX domain occupies 277–357 (DRSVVCSISV…GIANSIISVT (81 aa)).

In Arabidopsis thaliana (Mouse-ear cress), this protein is Putative plant UBX domain-containing protein 15.